Reading from the N-terminus, the 178-residue chain is NADH-ubiquinone oxidoreductase chain 6 (178 aa).

5 helical membrane passes run 1-21, 25-45, 48-68, 89-109, and 152-172; these read MMTY…VGFS, SPIY…GIVL, GGSF…LVVF, VLLT…YLLL, and YGYW…IVVM.

The protein belongs to the complex I subunit 6 family.

It is found in the mitochondrion membrane. The catalysed reaction is a ubiquinone + NADH + 5 H(+)(in) = a ubiquinol + NAD(+) + 4 H(+)(out). In terms of biological role, core subunit of the mitochondrial membrane respiratory chain NADH dehydrogenase (Complex I) that is believed to belong to the minimal assembly required for catalysis. Complex I functions in the transfer of electrons from NADH to the respiratory chain. The immediate electron acceptor for the enzyme is believed to be ubiquinone. The chain is NADH-ubiquinone oxidoreductase chain 6 (MT-ND6) from Pseudosoriculus fumidus (Taiwanese brown-toothed shrew).